A 57-amino-acid chain; its full sequence is Large ribosomal subunit protein bL32c (57 aa).

It belongs to the bacterial ribosomal protein bL32 family.

Its subcellular location is the plastid. The protein resides in the chloroplast. The polypeptide is Large ribosomal subunit protein bL32c (Vitis vinifera (Grape)).